The sequence spans 447 residues: Ribosomal protein uS12 methylthiotransferase RimO (447 aa).

Residues 10–120 (PKVGFVSLGC…VVNAVHDVVP (111 aa)) enclose the MTTase N-terminal domain. C19, C55, C84, C153, C157, and C160 together coordinate [4Fe-4S] cluster. The region spanning 139–377 (LTPRHYAYLK…MAHQQAISAA (239 aa)) is the Radical SAM core domain. In terms of domain architecture, TRAM spans 380–447 (QMKIGKEIEV…DEYDLWAEML (68 aa)).

This sequence belongs to the methylthiotransferase family. RimO subfamily. The cofactor is [4Fe-4S] cluster.

It localises to the cytoplasm. It catalyses the reaction L-aspartate(89)-[ribosomal protein uS12]-hydrogen + (sulfur carrier)-SH + AH2 + 2 S-adenosyl-L-methionine = 3-methylsulfanyl-L-aspartate(89)-[ribosomal protein uS12]-hydrogen + (sulfur carrier)-H + 5'-deoxyadenosine + L-methionine + A + S-adenosyl-L-homocysteine + 2 H(+). Its function is as follows. Catalyzes the methylthiolation of an aspartic acid residue of ribosomal protein uS12. The chain is Ribosomal protein uS12 methylthiotransferase RimO from Pseudomonas savastanoi pv. phaseolicola (strain 1448A / Race 6) (Pseudomonas syringae pv. phaseolicola (strain 1448A / Race 6)).